The following is a 267-amino-acid chain: Transmembrane protein 106B (267 aa).

Residues 1–92 (MGKALSHVAK…QRLRPRRTKL (92 aa)) lie on the Cytoplasmic side of the membrane. A helical transmembrane segment spans residues 93-113 (YVMASVILCLLLCTLAVFFLF). The Lumenal segment spans residues 114–267 (PRSIDVNYVG…EYSLNTPLTG (154 aa)). 4 N-linked (GlcNAc...) asparagine glycosylation sites follow: Asn-141, Asn-147, Asn-160, and Asn-179. Cys-210 and Cys-249 are oxidised to a cystine. A glycan (N-linked (GlcNAc...) asparagine) is linked at Asn-252.

The protein belongs to the TMEM106 family.

The protein localises to the late endosome membrane. It is found in the lysosome membrane. It localises to the cell membrane. In neurons, involved in the transport of late endosomes/lysosomes. May be involved in dendrite morphogenesis and maintenance by regulating lysosomal trafficking. May act as a molecular brake for retrograde transport of late endosomes/lysosomes, possibly via its interaction with MAP6. In motoneurons, may mediate the axonal transport of lysosomes and axonal sorting at the initial segment. It remains unclear whether TMEM106B affects the transport of moving lysosomes in the anterograde or retrograde direction in neurites and whether it is particularly important in the sorting of lysosomes in axons or in dendrites. In neurons, may also play a role in the regulation of lysosomal size and responsiveness to stress. Required for proper lysosomal acidification. The polypeptide is Transmembrane protein 106B (tmem106b) (Danio rerio (Zebrafish)).